Consider the following 236-residue polypeptide: tRNA1(Val) (adenine(37)-N6)-methyltransferase (236 aa).

The protein belongs to the methyltransferase superfamily. tRNA (adenine-N(6)-)-methyltransferase family.

The protein localises to the cytoplasm. The catalysed reaction is adenosine(37) in tRNA1(Val) + S-adenosyl-L-methionine = N(6)-methyladenosine(37) in tRNA1(Val) + S-adenosyl-L-homocysteine + H(+). Specifically methylates the adenine in position 37 of tRNA(1)(Val) (anticodon cmo5UAC). In Histophilus somni (strain 2336) (Haemophilus somnus), this protein is tRNA1(Val) (adenine(37)-N6)-methyltransferase.